Consider the following 328-residue polypeptide: RNA-binding motif protein, X-linked 2 (328 aa).

Lysine 8 is covalently cross-linked (Glycyl lysine isopeptide (Lys-Gly) (interchain with G-Cter in SUMO2)). Positions 36-114 (AWIFLGGLPY…RTIRVDHVAN (79 aa)) constitute an RRM domain. Positions 118–328 (PQESEDVDDV…SFHASDRRHY (211 aa)) are disordered. Threonine 140 is modified (phosphothreonine). Position 149 is a phosphoserine (serine 149). A compositionally biased stretch (basic residues) spans 157–172 (TKKPKKDKKEKKKKKE). Composition is skewed to basic and acidic residues over residues 192 to 219 (TVKE…ECRE), 236 to 247 (GRAEEPEWEAKK), and 255 to 273 (KPSS…DRGR). Lysine 246 is covalently cross-linked (Glycyl lysine isopeptide (Lys-Gly) (interchain with G-Cter in SUMO2)). Residue serine 274 is modified to Phosphoserine. Over residues 291–314 (HRSRSRSRSRSPDRSHRHKKHRYS) the composition is skewed to basic residues. Over residues 315 to 328 (HERESFHASDRRHY) the composition is skewed to basic and acidic residues.

This sequence belongs to the IST3 family. Part of the activated spliceosome B/catalytic step 1 spliceosome, one of the forms of the spliceosome which has a well-formed active site but still cannot catalyze the branching reaction and is composed of at least 52 proteins, the U2, U5 and U6 snRNAs and the pre-mRNA. Component of the minor spliceosome, which splices U12-type introns.

It is found in the nucleus. Involved in pre-mRNA splicing as component of the activated spliceosome. As a component of the minor spliceosome, involved in the splicing of U12-type introns in pre-mRNAs. The protein is RNA-binding motif protein, X-linked 2 (Rbmx2) of Rattus norvegicus (Rat).